Here is a 167-residue protein sequence, read N- to C-terminus: LIM domain transcription factor LMO4.1 (167 aa).

Over residues 1–17 (MVNNRVTESTTTAVSSN) the composition is skewed to polar residues. The interval 1-20 (MVNNRVTESTTTAVSSNGGP) is disordered. LIM zinc-binding domains follow at residues 22–84 (KACA…LFGS) and 86–148 (GACS…GLLS).

Its function is as follows. Acts as a positive cofactor of GATA transcription factors to establish the identity of the ventral mesoderm during gastrulation. Down-regulation in the dorsal mesoderm is necessary for the proper formation of this territory since, when present, lmo4 may bind ldb1 and restrict the availability of this cofactor for Spemman organizer transcription factors. At neurula stages, suppresses primary neuron differentiation and modulates gene expression at the Isthmic Organizer of the midbrain-hindbrain boundary. The polypeptide is LIM domain transcription factor LMO4.1 (lmo4.1) (Xenopus tropicalis (Western clawed frog)).